Here is a 223-residue protein sequence, read N- to C-terminus: Methanol utilization control regulatory protein MoxX (223 aa).

Residues 16 to 133 form the Response regulatory domain; sequence QILIVDDHPV…EICAAFTEVA (118 aa). Residues 155–220 form the HTH luxR-type domain; that stretch reads PGTSAPRLTG…DLVVKGIRYF (66 aa). The segment at residues 179–198 is a DNA-binding region (H-T-H motif); it reads YRDIADRACISYKTVSNVSL.

Phosphorylated by MoxY.

The protein localises to the cytoplasm. Functionally, member of the two-component regulatory system MoxY/MoxX probably involved in the regulation of the methanol dehydrogenase expression. The sequence is that of Methanol utilization control regulatory protein MoxX (moxX) from Paracoccus denitrificans.